We begin with the raw amino-acid sequence, 80 residues long: Small ribosomal subunit protein bS18c (80 aa).

Residues 1 to 19 (MKKFISRPKRSSRRRKKTP) are compositionally biased toward basic residues. The tract at residues 1-24 (MKKFISRPKRSSRRRKKTPIKPGE) is disordered.

Belongs to the bacterial ribosomal protein bS18 family. In terms of assembly, part of the 30S ribosomal subunit.

Its subcellular location is the plastid. It localises to the chloroplast. The protein is Small ribosomal subunit protein bS18c of Staurastrum punctulatum (Green alga).